Here is a 313-residue protein sequence, read N- to C-terminus: Ribosomal RNA small subunit methyltransferase H (313 aa).

Residues 35–37, Asp55, Phe79, Asp101, and Gln108 contribute to the S-adenosyl-L-methionine site; that span reads GGH.

Belongs to the methyltransferase superfamily. RsmH family.

It localises to the cytoplasm. It catalyses the reaction cytidine(1402) in 16S rRNA + S-adenosyl-L-methionine = N(4)-methylcytidine(1402) in 16S rRNA + S-adenosyl-L-homocysteine + H(+). In terms of biological role, specifically methylates the N4 position of cytidine in position 1402 (C1402) of 16S rRNA. This Klebsiella pneumoniae (strain 342) protein is Ribosomal RNA small subunit methyltransferase H.